The sequence spans 311 residues: Probable flavin reductase (311 aa).

FMN is bound by residues 38–41, 55–61, 88–89, and R95; these read TANS, CLAKSSR, and FA.

Belongs to the non-flavoprotein flavin reductase family.

In Rhizobium meliloti (strain 1021) (Ensifer meliloti), this protein is Probable flavin reductase.